The sequence spans 499 residues: GTPase Der (499 aa).

Residues 3 to 166 (PVIALVGRPN…QALGIFPKDN (164 aa)) enclose the EngA-type G 1 domain. Residues 9–16 (GRPNVGKS), 56–60 (DTGGI), and 118–121 (NKVD) contribute to the GTP site. Residues 166 to 199 (NADENAEGEEGGELAEGEEVVAEGQEPKRIPGPS) form a disordered region. Acidic residues predominate over residues 168 to 186 (DENAEGEEGGELAEGEEVV). Basic and acidic residues predominate over residues 190–199 (QEPKRIPGPS). Positions 204-377 (IKIAIIGRPN…SVQAAFKSAI (174 aa)) constitute an EngA-type G 2 domain. GTP-binding positions include 210 to 217 (GRPNVGKS), 257 to 261 (DTAGV), and 322 to 325 (NKWD). Residues 378–462 (TRWPTSRLTQ…PIRIEYKGGD (85 aa)) form the KH-like domain. Basic and acidic residues predominate over residues 459-472 (KGGDNPYEGKKNTL). The interval 459 to 499 (KGGDNPYEGKKNTLTDRQVNKKRRLMSHHKKAEKKRRDKKR) is disordered. Residues 478-499 (NKKRRLMSHHKKAEKKRRDKKR) show a composition bias toward basic residues.

It belongs to the TRAFAC class TrmE-Era-EngA-EngB-Septin-like GTPase superfamily. EngA (Der) GTPase family. As to quaternary structure, associates with the 50S ribosomal subunit.

In terms of biological role, GTPase that plays an essential role in the late steps of ribosome biogenesis. In Stutzerimonas stutzeri (strain A1501) (Pseudomonas stutzeri), this protein is GTPase Der.